A 290-amino-acid chain; its full sequence is ATP synthase gamma chain (290 aa).

Belongs to the ATPase gamma chain family. F-type ATPases have 2 components, CF(1) - the catalytic core - and CF(0) - the membrane proton channel. CF(1) has five subunits: alpha(3), beta(3), gamma(1), delta(1), epsilon(1). CF(0) has three main subunits: a, b and c.

It is found in the cell inner membrane. In terms of biological role, produces ATP from ADP in the presence of a proton gradient across the membrane. The gamma chain is believed to be important in regulating ATPase activity and the flow of protons through the CF(0) complex. This chain is ATP synthase gamma chain, found in Anaeromyxobacter dehalogenans (strain 2CP-1 / ATCC BAA-258).